Consider the following 502-residue polypeptide: Probable malate:quinone oxidoreductase (502 aa).

This sequence belongs to the MQO family. FAD is required as a cofactor.

The catalysed reaction is (S)-malate + a quinone = a quinol + oxaloacetate. It participates in carbohydrate metabolism; tricarboxylic acid cycle; oxaloacetate from (S)-malate (quinone route): step 1/1. This chain is Probable malate:quinone oxidoreductase, found in Parasynechococcus marenigrum (strain WH8102).